A 100-amino-acid polypeptide reads, in one-letter code: Urease subunit gamma 2 (100 aa).

Belongs to the urease gamma subunit family. In terms of assembly, heterotrimer of UreA (gamma), UreB (beta) and UreC (alpha) subunits. Three heterotrimers associate to form the active enzyme.

It localises to the cytoplasm. The enzyme catalyses urea + 2 H2O + H(+) = hydrogencarbonate + 2 NH4(+). The protein operates within nitrogen metabolism; urea degradation; CO(2) and NH(3) from urea (urease route): step 1/1. The sequence is that of Urease subunit gamma 2 from Psychrobacter cryohalolentis (strain ATCC BAA-1226 / DSM 17306 / VKM B-2378 / K5).